Here is a 29-residue protein sequence, read N- to C-terminus: Cycloviolacin-O22 (29 aa).

The cyclopeptide (Gly-Asn) cross-link spans 1-29 (GLPICGETCVGGTCNTPGCTCSWPVCTRN). 3 disulfides stabilise this stretch: cysteine 5/cysteine 19, cysteine 9/cysteine 21, and cysteine 14/cysteine 26.

This is a cyclic peptide. As to expression, expressed in roots and runners but not in leaves, petals and petioles (at protein level).

Its function is as follows. Probably participates in a plant defense mechanism. The sequence is that of Cycloviolacin-O22 from Viola odorata (Sweet violet).